Consider the following 206-residue polypeptide: MSFLNIFTFFSVLVSVATAVRFDLTNVTCNNLHGPHCGTYVMEVVGQNGTFLGQSTFAGADVLTESAGDAWARYLGQETRFLPKLTTIASNDTKNFSPLIFTTNIYTCNPQSIGDAMVPFANTVTGEIEYNSWADTADNASFITGLANQLFNSTQYGVQVASCYPNFASVILSTPTVNIFAANETLPDYCTAIQLKAVCPPDAGFA.

The signal sequence occupies residues 1–19; it reads MSFLNIFTFFSVLVSVATA. 6 N-linked (GlcNAc...) asparagine glycosylation sites follow: N26, N48, N91, N139, N152, and N183.

Belongs to the VEL1 family. Post-translationally, N-glycosylated.

It is found in the cytoplasm. It localises to the cytosol. The protein is VEL1-related protein YOR387C of Saccharomyces cerevisiae (strain ATCC 204508 / S288c) (Baker's yeast).